A 201-amino-acid chain; its full sequence is B-cell CLL/lymphoma 7 protein family member B-B (201 aa).

The tract at residues Q104–S201 is disordered.

This sequence belongs to the BCL7 family.

The chain is B-cell CLL/lymphoma 7 protein family member B-B from Danio rerio (Zebrafish).